Here is a 332-residue protein sequence, read N- to C-terminus: L-lactate dehydrogenase A chain (332 aa).

NAD(+) is bound by residues 29-57 and Arg-99; that span reads GAVG…IEDK. Positions 106, 138, and 169 each coordinate substrate. Asn-138 contacts NAD(+). The Proton acceptor role is filled by His-193. Thr-248 lines the substrate pocket.

This sequence belongs to the LDH/MDH superfamily. LDH family. As to quaternary structure, homotetramer.

The protein resides in the cytoplasm. It carries out the reaction (S)-lactate + NAD(+) = pyruvate + NADH + H(+). The protein operates within fermentation; pyruvate fermentation to lactate; (S)-lactate from pyruvate: step 1/1. In terms of biological role, interconverts simultaneously and stereospecifically pyruvate and lactate with concomitant interconversion of NADH and NAD(+). The sequence is that of L-lactate dehydrogenase A chain (LDHA) from Pelodiscus sinensis japonicus (Chinese soft-shelled turtle).